Consider the following 474-residue polypeptide: Mercuric reductase (474 aa).

FAD contacts are provided by A19, G39, and T44. A disulfide bridge connects residues C45 and C50. K54, A119, D315, and V323 together coordinate FAD. C471 and C472 together coordinate Hg(2+).

The protein belongs to the class-I pyridine nucleotide-disulfide oxidoreductase family. Homodimer. FAD serves as cofactor.

It catalyses the reaction Hg + NADP(+) + H(+) = Hg(2+) + NADPH. Resistance to Hg(2+) in bacteria appears to be governed by a specialized system which includes mercuric reductase. MerA protein is responsible for volatilizing mercury as Hg(0). This is Mercuric reductase (merA) from Streptomyces lividans.